Reading from the N-terminus, the 278-residue chain is Thiazole synthase (278 aa).

The active-site Schiff-base intermediate with DXP is the Lys107. 1-deoxy-D-xylulose 5-phosphate is bound by residues Gly168, 194-195, and 216-217; these read AG and AS.

This sequence belongs to the ThiG family. In terms of assembly, homotetramer. Forms heterodimers with either ThiH or ThiS.

It localises to the cytoplasm. It catalyses the reaction [ThiS sulfur-carrier protein]-C-terminal-Gly-aminoethanethioate + 2-iminoacetate + 1-deoxy-D-xylulose 5-phosphate = [ThiS sulfur-carrier protein]-C-terminal Gly-Gly + 2-[(2R,5Z)-2-carboxy-4-methylthiazol-5(2H)-ylidene]ethyl phosphate + 2 H2O + H(+). The protein operates within cofactor biosynthesis; thiamine diphosphate biosynthesis. In terms of biological role, catalyzes the rearrangement of 1-deoxy-D-xylulose 5-phosphate (DXP) to produce the thiazole phosphate moiety of thiamine. Sulfur is provided by the thiocarboxylate moiety of the carrier protein ThiS. In vitro, sulfur can be provided by H(2)S. In Corynebacterium urealyticum (strain ATCC 43042 / DSM 7109), this protein is Thiazole synthase.